The following is a 178-amino-acid chain: Cytochrome b6-f complex iron-sulfur subunit (178 aa).

The chain crosses the membrane as a helical span at residues 20-42; that stretch reads LLTFGSVTGVALGALYPVANYFI. Residues 65–161 form the Rieske domain; it reads ASGWLSSHPE…VSVENDNVFV (97 aa). Positions 107, 109, 125, and 128 each coordinate [2Fe-2S] cluster. A disulfide bridge links cysteine 112 with cysteine 127.

The protein belongs to the Rieske iron-sulfur protein family. In terms of assembly, the 4 large subunits of the cytochrome b6-f complex are cytochrome b6, subunit IV (17 kDa polypeptide, PetD), cytochrome f and the Rieske protein, while the 4 small subunits are PetG, PetL, PetM and PetN. The complex functions as a dimer. [2Fe-2S] cluster is required as a cofactor.

The protein localises to the cellular thylakoid membrane. The enzyme catalyses 2 oxidized [plastocyanin] + a plastoquinol + 2 H(+)(in) = 2 reduced [plastocyanin] + a plastoquinone + 4 H(+)(out). Functionally, component of the cytochrome b6-f complex, which mediates electron transfer between photosystem II (PSII) and photosystem I (PSI), cyclic electron flow around PSI, and state transitions. In Synechococcus sp. (strain CC9605), this protein is Cytochrome b6-f complex iron-sulfur subunit.